We begin with the raw amino-acid sequence, 132 residues long: Small integral membrane protein 33 (132 aa).

A disordered region spans residues 1–28 (MHQAGHYSWPSPAVNSSSEQEPQRQLPE). Asn15 carries N-linked (GlcNAc...) asparagine glycosylation. The chain crosses the membrane as a helical span at residues 43 to 63 (PVVTVIVAVFVLLAVCIIVAV). Positions 99–132 (PQDSPEEAPPGPLVPGSCPAPDGPRPSIDEVTCL) are disordered.

It localises to the membrane. This chain is Small integral membrane protein 33, found in Homo sapiens (Human).